The sequence spans 333 residues: uncharacterized protein (333 aa).

It belongs to the proline racemase family.

This is an uncharacterized protein from Vibrio parahaemolyticus serotype O3:K6 (strain RIMD 2210633).